The sequence spans 254 residues: Coproheme decarboxylase (254 aa).

Fe-coproporphyrin III contacts are provided by residues R136, 150 to 154, H177, Q190, and S228; that span reads YPMDK. Y150 is an active-site residue.

It belongs to the ChdC family. Type 1 subfamily. Fe-coproporphyrin III is required as a cofactor.

It catalyses the reaction Fe-coproporphyrin III + 2 H2O2 + 2 H(+) = heme b + 2 CO2 + 4 H2O. The catalysed reaction is Fe-coproporphyrin III + H2O2 + H(+) = harderoheme III + CO2 + 2 H2O. It carries out the reaction harderoheme III + H2O2 + H(+) = heme b + CO2 + 2 H2O. It participates in porphyrin-containing compound metabolism; protoheme biosynthesis. Involved in coproporphyrin-dependent heme b biosynthesis. Catalyzes the decarboxylation of Fe-coproporphyrin III (coproheme) to heme b (protoheme IX), the last step of the pathway. The reaction occurs in a stepwise manner with a three-propionate harderoheme intermediate. The chain is Coproheme decarboxylase from Bacillus subtilis (strain 168).